The primary structure comprises 339 residues: DNA-directed RNA polymerase subunit alpha (339 aa).

Residues 1 to 233 form an alpha N-terminal domain (alpha-NTD) region; it reads MVREEVAGST…DLFLPFLHAE (233 aa). The segment at 266-339 is alpha C-terminal domain (alpha-CTD); it reads GIPLNCIFID…MDLLKNKLSF (74 aa).

It belongs to the RNA polymerase alpha chain family. As to quaternary structure, in plastids the minimal PEP RNA polymerase catalytic core is composed of four subunits: alpha, beta, beta', and beta''. When a (nuclear-encoded) sigma factor is associated with the core the holoenzyme is formed, which can initiate transcription.

The protein localises to the plastid. It localises to the chloroplast. It carries out the reaction RNA(n) + a ribonucleoside 5'-triphosphate = RNA(n+1) + diphosphate. DNA-dependent RNA polymerase catalyzes the transcription of DNA into RNA using the four ribonucleoside triphosphates as substrates. The protein is DNA-directed RNA polymerase subunit alpha of Agrostis stolonifera (Creeping bentgrass).